The chain runs to 440 residues: Chorismate synthase 1, chloroplastic (440 aa).

Residues 1-54 constitute a chloroplast transit peptide; sequence MASFVPTKQFVGASSSSDIGSSRLVSLQLPSKFSSSNFHLPSRPSQLKRLEIQA. Residues 100-147 are disordered; the sequence is RRRPGQSRITTPRKETDTCKISSGTADGLTTGSPIKVEVPNTDQRGND. Over residues 118–132 the composition is skewed to polar residues; the sequence is CKISSGTADGLTTGS.

The protein belongs to the chorismate synthase family. Homotetramer. FMNH2 is required as a cofactor. As to expression, predominantly expressed in flowers and roots and, to a lesser extent, in stems, leaves, and cotyledons.

The protein localises to the plastid. The protein resides in the chloroplast. The catalysed reaction is 5-O-(1-carboxyvinyl)-3-phosphoshikimate = chorismate + phosphate. It functions in the pathway metabolic intermediate biosynthesis; chorismate biosynthesis; chorismate from D-erythrose 4-phosphate and phosphoenolpyruvate: step 7/7. In terms of biological role, catalyzes the last common step of the biosynthesis of aromatic amino acids, produced via the shikimic acid pathway. In Solanum lycopersicum (Tomato), this protein is Chorismate synthase 1, chloroplastic (CS1).